A 353-amino-acid chain; its full sequence is Envelope glycoprotein I (353 aa).

The N-terminal stretch at 1-20 is a signal peptide; sequence MLLWYTTASIMRYLMVFMLF. The Virion surface segment spans residues 21-274; sequence GIQCAAAIIY…SADVFMIAVP (254 aa). N-linked (GlcNAc...) asparagine; by host glycans are attached at residues Asn40, Asn75, Asn84, Asn122, Asn138, Asn227, and Asn252. The chain crosses the membrane as a helical span at residues 275 to 293; sequence ITASLLVILAIIIVVTVGI. At 294-353 the chain is on the intravirion side; that stretch reads YRRRSSEKRKIYRPKRTKEQASTEKRERSESDVLLEAAVARLETIQEENPPHSVINPFTK. Residues 303–324 form a disordered region; the sequence is KIYRPKRTKEQASTEKRERSES. Positions 310 to 324 are enriched in basic and acidic residues; it reads TKEQASTEKRERSES.

This sequence belongs to the alphaherpesvirinae glycoprotein I family. As to quaternary structure, interacts with gE.

The protein localises to the virion membrane. It is found in the host cell membrane. The protein resides in the host cell junction. Its subcellular location is the host Golgi apparatus membrane. In terms of biological role, in epithelial cells, the heterodimer gE/gI is required for the cell-to-cell spread of the virus, by sorting nascent virions to cell junctions. Once the virus reaches the cell junctions, virus particles can spread to adjacent cells extremely rapidly through interactions with cellular receptors that accumulate at these junctions. Implicated in basolateral spread in polarized cells. In neuronal cells, gE/gI is essential for the anterograde spread of the infection throughout the host nervous system. Together with US9, the heterodimer gE/gI is involved in the sorting and transport of viral structural components toward axon tips. The chain is Envelope glycoprotein I (gI) from Chlorocebus aethiops (Green monkey).